Here is a 1235-residue protein sequence, read N- to C-terminus: Gem-associated protein 5 (1235 aa).

A WD 1 repeat occupies 55-102 (STRINILALDVSPMWGLGNGGPTKPFAIVGDDLSVQVWDCALGEAVIG). A disordered region spans residues 227-263 (NNLALSAEEWRSRNGGQEEKPKTKPPPLTKSKAAESD). Basic and acidic residues predominate over residues 234 to 248 (EEWRSRNGGQEEKPK). Phosphoserine is present on residues Ser289, Ser290, Ser351, and Ser354. The disordered stretch occupies residues 340 to 368 (DCEPTKPTGPLSDASTISNKNDASDSTEG). Residues 352 to 368 (DASTISNKNDASDSTEG) are compositionally biased toward polar residues. Thr355 carries the phosphothreonine modification. A Phosphoserine modification is found at Ser357. Thr411 bears the Phosphothreonine mark. WD repeat units lie at residues 428-469 (ISAE…HAGK), 475-512 (KTAGKLNNVYWLNNHVIVSLSRHQLFFWSVEFERKMLR), 565-605 (TVAF…TSCL), 611-650 (YVSSNVYCLAWSPNCLELAFGTFDGTVGILDVERMKVKTH), 690-730 (TIVN…EKSW), 739-779 (LFAR…RNWK), and 788-828 (TEKA…KPPL). Positions 443–447 (LETLL) match the LXXLL motif motif. Residues 963-980 (KEQNNRSAKECPKCKEQS) are compositionally biased toward basic and acidic residues. Residues 963 to 983 (KEQNNRSAKECPKCKEQSPDS) form a disordered region.

As to quaternary structure, component of the core survival motor neuron (SMN) complex composed of Smn, Gem2, Gem3, rig/Gem5 and one of 3 almost identical Gem4 paralogs encoded by Glos/Gem4a, Gem4b or Gem4c. Interacts with nuclear receptors EcR, svp (seven up), usp (ultraspiracle), Hr39 and Hr3. In terms of tissue distribution, expressed in the brain and salivary glands of early and late second instar larvae. Expressed in nurse cells and oocytes.

Its subcellular location is the nucleus. The protein localises to the cytoplasm. It localises to the U-body. The protein resides in the gem. Component of the survival motor neuron (SMN) complex that catalyzes the assembly of small nuclear ribonucleoproteins (snRNPs), the building blocks of the spliceosome, and thereby plays an important role in the splicing of cellular pre-mRNAs. Nuclear receptor cofactor for the ecdysone-regulated processes of molting and puparium formation. Acts downstream from ecdysone biosynthesis and release to control the expression of specific ecdysone-regulated genes such as Eip74EF (E74). Essential in muscle and neuronal tissues for motor function, including climbing ability and flight. This Drosophila melanogaster (Fruit fly) protein is Gem-associated protein 5.